Consider the following 504-residue polypeptide: Maturase K (504 aa).

This sequence belongs to the intron maturase 2 family. MatK subfamily.

It localises to the plastid. The protein resides in the chloroplast. Its function is as follows. Usually encoded in the trnK tRNA gene intron. Probably assists in splicing its own and other chloroplast group II introns. The chain is Maturase K from Lobularia maritima (Sweet alyssum).